A 304-amino-acid chain; its full sequence is MWRGRDVISARDFNRVDLEELFEMAKYMEKYAKSRVEFLKGKIMAVAFFEPSTRTRLSFEVAMKRLGGDVIGFWGAEGTSVEKGETLADTIRMLDAYSDIIVIRHKYEGAAKLAAEVAESPVINAGDGAYNHPTQAMLDVYTIWREFGTVDGLNIGLLGDLRHARTINSLLEILTNFKVRVYLISPELLRPRVETINYIQSRGLMLSFHTNIEEVIHELDVVYVVRIQKERFIDPLEYERIKGSYKITLDTLKNVKKNLIILHPLPRVDEIDHRVDSTPYAKYFRQAAFGVPLRMALLYLILQP.

The carbamoyl phosphate site is built by arginine 54 and threonine 55. Residue lysine 83 coordinates L-aspartate. Carbamoyl phosphate-binding residues include arginine 104, histidine 132, and glutamine 135. L-aspartate is bound by residues arginine 165 and arginine 226. 2 residues coordinate carbamoyl phosphate: leucine 265 and proline 266.

This sequence belongs to the aspartate/ornithine carbamoyltransferase superfamily. ATCase family. In terms of assembly, heterooligomer of catalytic and regulatory chains.

The catalysed reaction is carbamoyl phosphate + L-aspartate = N-carbamoyl-L-aspartate + phosphate + H(+). The protein operates within pyrimidine metabolism; UMP biosynthesis via de novo pathway; (S)-dihydroorotate from bicarbonate: step 2/3. In terms of biological role, catalyzes the condensation of carbamoyl phosphate and aspartate to form carbamoyl aspartate and inorganic phosphate, the committed step in the de novo pyrimidine nucleotide biosynthesis pathway. The protein is Aspartate carbamoyltransferase catalytic subunit of Pyrobaculum islandicum (strain DSM 4184 / JCM 9189 / GEO3).